Consider the following 352-residue polypeptide: Phosphatase Herzog (352 aa).

The prion-like domain necessary for both protein assembly and membrane targeting stretch occupies residues 1–102 (MDATSIITQV…PLPDQQRYLL (102 aa)). A mediates substrate recognition region spans residues 103-267 (PQVRLTDMHR…ELIPLFEKLS (165 aa)). Residues 108 to 266 (TDMHRKCMVI…RELIPLFEKL (159 aa)) form the FCP1 homology domain. Disordered regions lie at residues 284–310 (NNQT…LQQQ) and 332–352 (TMLN…LQKT).

In terms of assembly, monomer. Forms higher-order protein aggregates with amyloid-like features during gastrulation. Interacts with babo, dah, Irk1, pch2, Ras64B, sax and Src64B.

It is found in the cell membrane. It catalyses the reaction O-phospho-L-seryl-[protein] + H2O = L-seryl-[protein] + phosphate. With respect to regulation, phosphatase activity requires amyloid-like aggregation on the membrane. Prion-like membrane-associated phosphatase. Phosphatase activity depends on amyloid-like assembly at the membrane. Might have a role in establishment of segment polarity in embryos. The protein is Phosphatase Herzog of Drosophila melanogaster (Fruit fly).